The following is a 2287-amino-acid chain: Protein Ycf2 (2287 aa).

Residue glycine 1641–serine 1648 participates in ATP binding.

The protein belongs to the Ycf2 family.

It localises to the plastid. It is found in the chloroplast stroma. In terms of biological role, probable ATPase of unknown function. Its presence in a non-photosynthetic plant (Epifagus virginiana) and experiments in tobacco indicate that it has an essential function which is probably not related to photosynthesis. This chain is Protein Ycf2, found in Lepidium virginicum (Virginia pepperweed).